The following is a 339-amino-acid chain: GTPase Obg (339 aa).

In terms of domain architecture, Obg spans 1–159 (MKFVDEAFVR…RELKLELKLL (159 aa)). The region spanning 160-333 (ADVGLLGLPN…LCYDLMSFLE (174 aa)) is the OBG-type G domain. GTP is bound by residues 166–173 (GLPNAGKS), 191–195 (FTTLY), 213–216 (DIPG), 283–286 (NKID), and 314–316 (SAI). Residues Ser173 and Thr193 each contribute to the Mg(2+) site.

Belongs to the TRAFAC class OBG-HflX-like GTPase superfamily. OBG GTPase family. In terms of assembly, monomer. It depends on Mg(2+) as a cofactor.

The protein localises to the cytoplasm. In terms of biological role, an essential GTPase which binds GTP, GDP and possibly (p)ppGpp with moderate affinity, with high nucleotide exchange rates and a fairly low GTP hydrolysis rate. Plays a role in control of the cell cycle, stress response, ribosome biogenesis and in those bacteria that undergo differentiation, in morphogenesis control. This Coxiella burnetii (strain RSA 331 / Henzerling II) protein is GTPase Obg.